Reading from the N-terminus, the 309-residue chain is UDP-N-acetylenolpyruvoylglucosamine reductase (309 aa).

The FAD-binding PCMH-type domain occupies 34 to 221; it reads RVGGPAQVLF…TAAREAAQPI (188 aa). Arg-179 is an active-site residue. Ser-228 acts as the Proton donor in catalysis. Glu-298 is an active-site residue.

The protein belongs to the MurB family. Requires FAD as cofactor.

Its subcellular location is the cytoplasm. It catalyses the reaction UDP-N-acetyl-alpha-D-muramate + NADP(+) = UDP-N-acetyl-3-O-(1-carboxyvinyl)-alpha-D-glucosamine + NADPH + H(+). Its pathway is cell wall biogenesis; peptidoglycan biosynthesis. Its function is as follows. Cell wall formation. This chain is UDP-N-acetylenolpyruvoylglucosamine reductase, found in Methylorubrum extorquens (strain CM4 / NCIMB 13688) (Methylobacterium extorquens).